A 159-amino-acid chain; its full sequence is MSNFTHINASGEANMVDVSAKQETVREARAEAFVHMAPETLELIVSGSHHKGDVFATARIAGIQAAKKTWDLIPLCHPLLLSKVEVQLEAIEAENMVRIESVCKLAGKTGVEMEALTAASVAALTIYDMCKAVQKDMVIGQVRLLEKTGGKSGHFKADA.

Residues 75-77 (LCH) and 113-114 (ME) contribute to the substrate site. The active site involves aspartate 128.

It belongs to the MoaC family. Homohexamer; trimer of dimers.

It carries out the reaction (8S)-3',8-cyclo-7,8-dihydroguanosine 5'-triphosphate = cyclic pyranopterin phosphate + diphosphate. It functions in the pathway cofactor biosynthesis; molybdopterin biosynthesis. Catalyzes the conversion of (8S)-3',8-cyclo-7,8-dihydroguanosine 5'-triphosphate to cyclic pyranopterin monophosphate (cPMP). This Aliivibrio fischeri (strain MJ11) (Vibrio fischeri) protein is Cyclic pyranopterin monophosphate synthase.